The chain runs to 425 residues: 2-methylserine hydroxymethyltransferase (425 aa).

(6S)-5,6,7,8-tetrahydrofolate is bound by residues Leu-126 and 130–132 (GHL). Lys-235 is modified (N6-(pyridoxal phosphate)lysine).

This sequence belongs to the SHMT family. In terms of assembly, homodimer. It depends on pyridoxal 5'-phosphate as a cofactor.

The protein localises to the cytoplasm. The catalysed reaction is (6R)-5,10-methylene-5,6,7,8-tetrahydrofolate + D-alanine + H2O = 2-methylserine + (6S)-5,6,7,8-tetrahydrofolate. It participates in one-carbon metabolism; tetrahydrofolate interconversion. Its function is as follows. Catalyzes the reversible interconversion of alpha-methyl-L-serine to D-alanine with tetrahydrofolate (THF) serving as the one-carbon carrier. Cannot use alpha-methyl-D-serine, L-serine, D-serine or L-alanine. The sequence is that of 2-methylserine hydroxymethyltransferase from Aminobacter sp.